The primary structure comprises 82 residues: Small ribosomal subunit protein bS18 (82 aa).

The protein belongs to the bacterial ribosomal protein bS18 family. As to quaternary structure, part of the 30S ribosomal subunit. Forms a tight heterodimer with protein bS6.

Functionally, binds as a heterodimer with protein bS6 to the central domain of the 16S rRNA, where it helps stabilize the platform of the 30S subunit. This Rhizobium meliloti (strain 1021) (Ensifer meliloti) protein is Small ribosomal subunit protein bS18.